Consider the following 248-residue polypeptide: tRNA (guanine-N(1)-)-methyltransferase (248 aa).

S-adenosyl-L-methionine contacts are provided by residues G113 and 133-138 (IGDYVL). The disordered stretch occupies residues 226–248 (ARPAQTIRAKGESQKTPKNKTDG). The segment covering 234 to 248 (AKGESQKTPKNKTDG) has biased composition (basic and acidic residues).

This sequence belongs to the RNA methyltransferase TrmD family. As to quaternary structure, homodimer.

Its subcellular location is the cytoplasm. The catalysed reaction is guanosine(37) in tRNA + S-adenosyl-L-methionine = N(1)-methylguanosine(37) in tRNA + S-adenosyl-L-homocysteine + H(+). Its function is as follows. Specifically methylates guanosine-37 in various tRNAs. The chain is tRNA (guanine-N(1)-)-methyltransferase from Rhodopseudomonas palustris (strain ATCC BAA-98 / CGA009).